The following is an 840-amino-acid chain: V-type proton ATPase 116 kDa subunit a 4 (840 aa).

The Cytoplasmic segment spans residues 1–390 (MVSVFRSEEM…DAYGVGSYRE (390 aa)). The helical transmembrane segment at 391 to 409 (INPAPYTIITFPFLFAVMF) threads the bilayer. Residues 410 to 411 (GD) are Vacuolar-facing. Residues 412–428 (CGHGTVMLLAALWMILN) traverse the membrane as a helical segment. Residues 429-443 (ERRLLSQKTDNEIWN) lie on the Cytoplasmic side of the membrane. The helical transmembrane segment at 444–473 (TFFHGRYLILLMGIFSIYTGLIYNDCFSKS) threads the bilayer. Topologically, residues 474–538 (LNIFGSSWSV…ASNKLTFLNS (65 aa)) are vacuolar. A helical transmembrane segment spans residues 539–558 (YKMKMSVILGIVQMVFGVIL). The Cytoplasmic segment spans residues 559-576 (SLFNHIYFRRTLNIILQF). The helical transmembrane segment at 577 to 597 (IPEMIFILCLFGYLVFMIIFK) threads the bilayer. Residues 598 to 642 (WCCFDVHVSQHAPSILIHFINMFLFNYSDSSNAPLYKHQQEVQSF) are Vacuolar-facing. A helical transmembrane segment spans residues 643–662 (FVVMALISVPWMLLIKPFIL). Residues 663-727 (RASHRKSQLQ…DVFVHQAIHT (65 aa)) lie on the Cytoplasmic side of the membrane. A disordered region spans residues 675–704 (RIQEDATENIEGDSSSPSSRSGQRTSADTH). A helical membrane pass occupies residues 728–752 (IEYCLGCISNTASYLRLWALSLAHA). Over 753–773 (QLSEVLWTMVMNSGLQTRGWG) the chain is Vacuolar. The helical transmembrane segment at 774 to 812 (GIVGVFIIFAVFAVLTVAILLIMEGLSAFLHALRLHWVE) threads the bilayer. At 813-840 (FQNKFYVGDGYKFSPFSFKHILDGTAEE) the chain is on the cytoplasmic side.

It belongs to the V-ATPase 116 kDa subunit family. As to quaternary structure, V-ATPase is a heteromultimeric enzyme made up of two complexes: the ATP-hydrolytic V1 complex and the proton translocation V0 complex. The V1 complex consists of three catalytic AB heterodimers that form a heterohexamer, three peripheral stalks each consisting of EG heterodimers, one central rotor including subunits D and F, and the regulatory subunits C and H. The proton translocation complex V0 consists of the proton transport subunit a, a ring of proteolipid subunits c9c'', rotary subunit d, subunits e and f, and the accessory subunits ATP6AP1/Ac45 and ATP6AP2/PRR. Interacts with the V1 complex V-ATPase subunit A ATP6V1A. Interacts with the V0 complex V-ATPase subunit c ATP6V0C. In terms of tissue distribution, expressed in adult and fetal kidney. Found in the inner ear.

The protein localises to the apical cell membrane. The protein resides in the basolateral cell membrane. Subunit of the V0 complex of vacuolar(H+)-ATPase (V-ATPase), a multisubunit enzyme composed of a peripheral complex (V1) that hydrolyzes ATP and a membrane integral complex (V0) that translocates protons. V-ATPase is responsible for acidifying and maintaining the pH of intracellular compartments and in some cell types, is targeted to the plasma membrane, where it is responsible for acidifying the extracellular environment. Involved in normal vectorial acid transport into the urine by the kidney. The sequence is that of V-type proton ATPase 116 kDa subunit a 4 (ATP6V0A4) from Homo sapiens (Human).